Reading from the N-terminus, the 159-residue chain is Ribosomal RNA large subunit methyltransferase H (159 aa).

Residues Leu-76, Gly-108, and 127 to 132 (FGKLTM) contribute to the S-adenosyl-L-methionine site.

Belongs to the RNA methyltransferase RlmH family. In terms of assembly, homodimer.

The protein localises to the cytoplasm. It carries out the reaction pseudouridine(1915) in 23S rRNA + S-adenosyl-L-methionine = N(3)-methylpseudouridine(1915) in 23S rRNA + S-adenosyl-L-homocysteine + H(+). Specifically methylates the pseudouridine at position 1915 (m3Psi1915) in 23S rRNA. This is Ribosomal RNA large subunit methyltransferase H from Lactobacillus delbrueckii subsp. bulgaricus (strain ATCC 11842 / DSM 20081 / BCRC 10696 / JCM 1002 / NBRC 13953 / NCIMB 11778 / NCTC 12712 / WDCM 00102 / Lb 14).